The chain runs to 585 residues: MTQSTEQSTLDTYKRLWPYISFYKAGLSVAVVALIINALGDTLMLSMIKPLLDESFGGLDNIESDFLSMMPYYLVGLMILRGASGFVSTYCLSWVSGKVVMNLRRGLFNHFMKMPVSFFDKESSGALLSRITYDSEQVASATSSALVSMVREGASIIGLMALMFWNSWQLSAILLVIAPVVAFSIRLVSKRFRKISKNMQDAMGSVTSSAEQMLKGHKVVLSYGGQEVEKQRFDSVSNNMRQQTMKLVSAQAIANPVIQVIASFALVVVLVLANSEALRAELTPGTFAVVFGAMFGLMRPLKALTNVTSQFQRGMAACQTLFELMDLEAEEDNGKHKIARVNGDIQVKNVTFTYPTKDTPALRNVSFDLPAGKTLALVGRSGSGKSTIANLLTRFYDIDSGELILDGREVKDYQLSNLRDQVAVVSQNVHLFNDTIANNIAYASGDSFSRADIEKAAELAYAMDFIKGMPKGLDTMIGENGVSLSGGQRQRLAIARALLRNAPVLILDEATSALDTESERAIQSALEELQKDRTVLVIAHRLSTIEGADQILVVDDGEIIERGTHGELIKHDGAYAQLHRIQFGD.

5 consecutive transmembrane segments (helical) span residues 16-36, 66-86, 156-176, 252-272, and 278-298; these read LWPY…ALII, FLSM…ASGF, IIGL…ILLV, AIAN…VLVL, and LRAE…FGLM. The 285-residue stretch at 29-313 folds into the ABC transmembrane type-1 domain; that stretch reads VAVVALIINA…LTNVTSQFQR (285 aa). One can recognise an ABC transporter domain in the interval 345-581; the sequence is IQVKNVTFTY…DGAYAQLHRI (237 aa). 379–386 serves as a coordination point for ATP; it reads GRSGSGKS.

Belongs to the ABC transporter superfamily. Lipid exporter (TC 3.A.1.106) family. Homodimer.

Its subcellular location is the cell inner membrane. It carries out the reaction ATP + H2O + lipid A-core oligosaccharideSide 1 = ADP + phosphate + lipid A-core oligosaccharideSide 2.. Involved in lipopolysaccharide (LPS) biosynthesis. Translocates lipid A-core from the inner to the outer leaflet of the inner membrane. Transmembrane domains (TMD) form a pore in the inner membrane and the ATP-binding domain (NBD) is responsible for energy generation. This chain is ATP-dependent lipid A-core flippase, found in Photobacterium profundum (strain SS9).